The primary structure comprises 158 residues: MANEKQYPMTKEGKEKLEQELEYLKTVKRKEVVERIKIARGFGDLSENSEYDAAKDEQAFVESRIQMLENMIRNAVIIEEDKENPDVVSLGKSVTFIELPDGEEETYTIVGSAEADPFEGKISNDSPIAKSLLGRRVGDEVTVQTPGGEMLVKIVAVK.

Positions 10 to 75 (TKEGKEKLEQ…QMLENMIRNA (66 aa)) form a coiled coil.

Belongs to the GreA/GreB family.

Its function is as follows. Necessary for efficient RNA polymerase transcription elongation past template-encoded arresting sites. The arresting sites in DNA have the property of trapping a certain fraction of elongating RNA polymerases that pass through, resulting in locked ternary complexes. Cleavage of the nascent transcript by cleavage factors such as GreA or GreB allows the resumption of elongation from the new 3'terminus. GreA releases sequences of 2 to 3 nucleotides. This is Transcription elongation factor GreA from Geobacillus kaustophilus (strain HTA426).